The chain runs to 335 residues: Tetraacyldisaccharide 4'-kinase (335 aa).

ATP is bound at residue 59 to 66 (TAGGNGKT).

This sequence belongs to the LpxK family.

It catalyses the reaction a lipid A disaccharide + ATP = a lipid IVA + ADP + H(+). Its pathway is glycolipid biosynthesis; lipid IV(A) biosynthesis; lipid IV(A) from (3R)-3-hydroxytetradecanoyl-[acyl-carrier-protein] and UDP-N-acetyl-alpha-D-glucosamine: step 6/6. Its function is as follows. Transfers the gamma-phosphate of ATP to the 4'-position of a tetraacyldisaccharide 1-phosphate intermediate (termed DS-1-P) to form tetraacyldisaccharide 1,4'-bis-phosphate (lipid IVA). The chain is Tetraacyldisaccharide 4'-kinase from Aliivibrio salmonicida (strain LFI1238) (Vibrio salmonicida (strain LFI1238)).